The primary structure comprises 288 residues: Bifunctional protein FolD (288 aa).

Residues 166–168, Ser-191, and Ile-232 contribute to the NADP(+) site; that span reads GRS.

The protein belongs to the tetrahydrofolate dehydrogenase/cyclohydrolase family. In terms of assembly, homodimer.

The enzyme catalyses (6R)-5,10-methylene-5,6,7,8-tetrahydrofolate + NADP(+) = (6R)-5,10-methenyltetrahydrofolate + NADPH. It catalyses the reaction (6R)-5,10-methenyltetrahydrofolate + H2O = (6R)-10-formyltetrahydrofolate + H(+). It functions in the pathway one-carbon metabolism; tetrahydrofolate interconversion. In terms of biological role, catalyzes the oxidation of 5,10-methylenetetrahydrofolate to 5,10-methenyltetrahydrofolate and then the hydrolysis of 5,10-methenyltetrahydrofolate to 10-formyltetrahydrofolate. This is Bifunctional protein FolD from Rickettsia peacockii (strain Rustic).